The primary structure comprises 276 residues: NAD-capped RNA hydrolase NudC (276 aa).

Residue Arg82 coordinates substrate. Zn(2+)-binding residues include Cys112 and Cys115. Position 125 (Glu125) interacts with substrate. Residues Cys130 and Cys133 each contribute to the Zn(2+) site. Tyr138 contacts substrate. One can recognise a Nudix hydrolase domain in the interval 139 to 262; the sequence is PRISPSMIVL…SIARYLIDLY (124 aa). A divalent metal cation-binding residues include Ala172, Glu188, and Glu192. A Nudix box motif is present at residues 173 to 194; that stretch reads GFAEPGESAEECLVREVREEVA. Position 206-213 (206-213) interacts with substrate; the sequence is QCWPFPHS. Glu233 is an a divalent metal cation binding site. A substrate-binding site is contributed by Ala255.

The protein belongs to the Nudix hydrolase family. NudC subfamily. Homodimer. The cofactor is Mg(2+). It depends on Mn(2+) as a cofactor. Zn(2+) serves as cofactor.

It catalyses the reaction a 5'-end NAD(+)-phospho-ribonucleoside in mRNA + H2O = a 5'-end phospho-adenosine-phospho-ribonucleoside in mRNA + beta-nicotinamide D-ribonucleotide + 2 H(+). The enzyme catalyses NAD(+) + H2O = beta-nicotinamide D-ribonucleotide + AMP + 2 H(+). It carries out the reaction NADH + H2O = reduced beta-nicotinamide D-ribonucleotide + AMP + 2 H(+). MRNA decapping enzyme that specifically removes the nicotinamide adenine dinucleotide (NAD) cap from a subset of mRNAs by hydrolyzing the diphosphate linkage to produce nicotinamide mononucleotide (NMN) and 5' monophosphate mRNA. The NAD-cap is present at the 5'-end of some mRNAs and stabilizes RNA against 5'-processing. Has preference for mRNAs with a 5'-end purine. Catalyzes the hydrolysis of a broad range of dinucleotide pyrophosphates. This Pseudomonas entomophila (strain L48) protein is NAD-capped RNA hydrolase NudC.